A 1315-amino-acid chain; its full sequence is Chaoptin (1315 aa).

The first 29 residues, 1-29 (MGLEFFFKFGYAFLTITLMIMIWMSLARA), serve as a signal peptide directing secretion. N-linked (GlcNAc...) (high mannose) asparagine; alternate glycosylation is present at N77. N77 carries an N-linked (GlcNAc...) (paucimannose) asparagine; alternate glycan. LRR repeat units follow at residues 80–101 (KVFM…FLQS), 103–124 (GMYR…AFTG), 128–149 (SLWE…SLRH), 152–173 (KLRH…SFRG), 177–198 (SLQT…SFSG), 201–222 (ILET…VFVD), 226–247 (RLTR…ALGP), 250–271 (SLRT…ETYE), and 279–300 (NLDN…SFKY). An N-linked (GlcNAc...) (paucimannose) asparagine; alternate glycan is attached at N267. Residue N267 is glycosylated (N-linked (GlcNAc...) (complex) asparagine; alternate). N305 is a glycosylation site (N-linked (GlcNAc...) (high mannose) asparagine; alternate). N305 carries an N-linked (GlcNAc...) (paucimannose) asparagine; alternate glycan. LRR repeat units lie at residues 326-347 (RIRE…AFDS), 351-372 (SLQI…LFNN), 375-396 (VLRV…ETFN), 401-424 (TLLK…RNMT), 477-498 (GLKR…AFHE), 527-548 (SLQE…SFHF), 551-572 (NLRL…TFQG), 577-598 (KLEE…TFFD), 601-622 (ALRK…AFMN), 625-646 (ELEY…SFQN), 649-670 (KLEI…YFDQ), 676-696 (NLNV…SSWS), 708-729 (NIKI…YFRP), 733-754 (SLTH…VFGN), 757-778 (HLQW…AFKN), 781-802 (QLQL…IFKP), 805-826 (GLRI…LFYN), 828-849 (GMEK…SLSS), 854-875 (TLCE…DLSN), 879-900 (SLRY…VFAT), 903-924 (KLAV…SFMG), 928-948 (SLIK…IRLK), 949-970 (YLRE…LAHN), 973-994 (NLRM…TQAL), 996-1017 (HLRR…SFDG), 1021-1044 (DLEM…DSLP), and 1045-1066 (HLRS…PHLL). The N-linked (GlcNAc...) (high mannose) asparagine glycan is linked to N361. An N-linked (GlcNAc...) asparagine glycan is attached at N422. N-linked (GlcNAc...) (high mannose) asparagine glycosylation is present at N680. N692 is a glycosylation site (N-linked (GlcNAc...) (high mannose) asparagine; alternate). N-linked (GlcNAc...) (paucimannose) asparagine; alternate glycosylation is present at N692. N-linked (GlcNAc...) (high mannose) asparagine glycosylation occurs at N718. N-linked (GlcNAc...) asparagine glycosylation is present at N746. N-linked (GlcNAc...) (high mannose) asparagine glycosylation is present at N936. Residue N970 is glycosylated (N-linked (GlcNAc...) (paucimannose) asparagine). N1012 carries an N-linked (GlcNAc...) (complex) asparagine glycan. N-linked (GlcNAc...) (high mannose) asparagine glycans are attached at residues N1122, N1152, and N1171. In terms of domain architecture, LRRCT spans 1211-1274 (TDLNCDCDLG…DDLRETRCEN (64 aa)).

Belongs to the chaoptin family. Expressed in photoreceptor cells and their axons in the adult retina, the ocellus and larval photoreceptor organ.

Its subcellular location is the cell membrane. Functionally, required for photoreceptor cell morphogenesis. Mediates homophilic cellular adhesion. In Drosophila melanogaster (Fruit fly), this protein is Chaoptin (chp).